The chain runs to 700 residues: Mitogen-activated protein kinase 9 (700 aa).

The Protein kinase domain maps to 107–398; the sequence is YRIQEVIGKG…AEEALTDPYF (292 aa). Residues 113–121 and Lys-136 each bind ATP; that span reads IGKGSYGVV. Catalysis depends on Asp-233, which acts as the Proton acceptor. Thr-269 is modified (phosphothreonine). Positions 269 to 271 match the TXY motif; sequence TDY. Position 271 is a phosphotyrosine (Tyr-271). The disordered stretch occupies residues 475–523; the sequence is EESNGSGSAIPMERKHASLPRSTTVHSTPIPPKEQPLAASLKSSRPVSD.

The protein belongs to the protein kinase superfamily. CMGC Ser/Thr protein kinase family. MAP kinase subfamily. In terms of processing, dually phosphorylated on Thr-269 and Tyr-271, which activates the enzyme.

The enzyme catalyses L-seryl-[protein] + ATP = O-phospho-L-seryl-[protein] + ADP + H(+). The catalysed reaction is L-threonyl-[protein] + ATP = O-phospho-L-threonyl-[protein] + ADP + H(+). With respect to regulation, activated by threonine and tyrosine phosphorylation. This chain is Mitogen-activated protein kinase 9 (MPK9), found in Oryza sativa subsp. japonica (Rice).